Consider the following 425-residue polypeptide: 3-phosphoshikimate 1-carboxyvinyltransferase (425 aa).

3 residues coordinate 3-phosphoshikimate: Lys23, Ser24, and Arg28. Lys23 contributes to the phosphoenolpyruvate binding site. 2 residues coordinate phosphoenolpyruvate: Gly96 and Arg124. 6 residues coordinate 3-phosphoshikimate: Thr170, Ser171, Gln172, Ser198, Asp314, and Lys341. Gln172 is a binding site for phosphoenolpyruvate. The active-site Proton acceptor is Asp314. Phosphoenolpyruvate is bound by residues Arg345, Arg386, and Lys411.

The protein belongs to the EPSP synthase family. As to quaternary structure, monomer.

It is found in the cytoplasm. It carries out the reaction 3-phosphoshikimate + phosphoenolpyruvate = 5-O-(1-carboxyvinyl)-3-phosphoshikimate + phosphate. It participates in metabolic intermediate biosynthesis; chorismate biosynthesis; chorismate from D-erythrose 4-phosphate and phosphoenolpyruvate: step 6/7. In terms of biological role, catalyzes the transfer of the enolpyruvyl moiety of phosphoenolpyruvate (PEP) to the 5-hydroxyl of shikimate-3-phosphate (S3P) to produce enolpyruvyl shikimate-3-phosphate and inorganic phosphate. In Nostoc sp. (strain PCC 7120 / SAG 25.82 / UTEX 2576), this protein is 3-phosphoshikimate 1-carboxyvinyltransferase.